A 188-amino-acid polypeptide reads, in one-letter code: Elongation factor P (188 aa).

The protein belongs to the elongation factor P family.

It localises to the cytoplasm. The protein operates within protein biosynthesis; polypeptide chain elongation. Involved in peptide bond synthesis. Stimulates efficient translation and peptide-bond synthesis on native or reconstituted 70S ribosomes in vitro. Probably functions indirectly by altering the affinity of the ribosome for aminoacyl-tRNA, thus increasing their reactivity as acceptors for peptidyl transferase. The protein is Elongation factor P of Wolbachia sp. subsp. Brugia malayi (strain TRS).